Here is a 129-residue protein sequence, read N- to C-terminus: Large ribosomal subunit protein bL21 (129 aa).

It belongs to the bacterial ribosomal protein bL21 family. As to quaternary structure, part of the 50S ribosomal subunit. Contacts protein L20.

This protein binds to 23S rRNA in the presence of protein L20. The polypeptide is Large ribosomal subunit protein bL21 (Microcystis aeruginosa (strain NIES-843 / IAM M-2473)).